We begin with the raw amino-acid sequence, 275 residues long: 4-hydroxy-3-methylbut-2-enyl diphosphate reductase (275 aa).

Residue C12 participates in [4Fe-4S] cluster binding. The (2E)-4-hydroxy-3-methylbut-2-enyl diphosphate site is built by H36 and H70. Dimethylallyl diphosphate is bound by residues H36 and H70. 2 residues coordinate isopentenyl diphosphate: H36 and H70. A [4Fe-4S] cluster-binding site is contributed by C92. H120 lines the (2E)-4-hydroxy-3-methylbut-2-enyl diphosphate pocket. Position 120 (H120) interacts with dimethylallyl diphosphate. Residue H120 coordinates isopentenyl diphosphate. E122 functions as the Proton donor in the catalytic mechanism. T158 lines the (2E)-4-hydroxy-3-methylbut-2-enyl diphosphate pocket. Residue C186 participates in [4Fe-4S] cluster binding. The (2E)-4-hydroxy-3-methylbut-2-enyl diphosphate site is built by S214, S215, N216, and S258. Dimethylallyl diphosphate-binding residues include S214, S215, N216, and S258. The isopentenyl diphosphate site is built by S214, S215, N216, and S258.

This sequence belongs to the IspH family. It depends on [4Fe-4S] cluster as a cofactor.

The catalysed reaction is isopentenyl diphosphate + 2 oxidized [2Fe-2S]-[ferredoxin] + H2O = (2E)-4-hydroxy-3-methylbut-2-enyl diphosphate + 2 reduced [2Fe-2S]-[ferredoxin] + 2 H(+). The enzyme catalyses dimethylallyl diphosphate + 2 oxidized [2Fe-2S]-[ferredoxin] + H2O = (2E)-4-hydroxy-3-methylbut-2-enyl diphosphate + 2 reduced [2Fe-2S]-[ferredoxin] + 2 H(+). It functions in the pathway isoprenoid biosynthesis; dimethylallyl diphosphate biosynthesis; dimethylallyl diphosphate from (2E)-4-hydroxy-3-methylbutenyl diphosphate: step 1/1. It participates in isoprenoid biosynthesis; isopentenyl diphosphate biosynthesis via DXP pathway; isopentenyl diphosphate from 1-deoxy-D-xylulose 5-phosphate: step 6/6. Its function is as follows. Catalyzes the conversion of 1-hydroxy-2-methyl-2-(E)-butenyl 4-diphosphate (HMBPP) into a mixture of isopentenyl diphosphate (IPP) and dimethylallyl diphosphate (DMAPP). Acts in the terminal step of the DOXP/MEP pathway for isoprenoid precursor biosynthesis. The polypeptide is 4-hydroxy-3-methylbut-2-enyl diphosphate reductase (Sulfurimonas denitrificans (strain ATCC 33889 / DSM 1251) (Thiomicrospira denitrificans (strain ATCC 33889 / DSM 1251))).